The primary structure comprises 647 residues: Threonine--tRNA ligase (647 aa).

The region spanning 1–61 (MIKITFPDGA…EEDGSIEIVT (61 aa)) is the TGS domain. A catalytic region spans residues 240 to 538 (DHRKLGKELD…LIETYKGAFP (299 aa)). Cys334, His385, and His515 together coordinate Zn(2+).

Belongs to the class-II aminoacyl-tRNA synthetase family. As to quaternary structure, homodimer. Zn(2+) serves as cofactor.

The protein resides in the cytoplasm. It carries out the reaction tRNA(Thr) + L-threonine + ATP = L-threonyl-tRNA(Thr) + AMP + diphosphate + H(+). Functionally, catalyzes the attachment of threonine to tRNA(Thr) in a two-step reaction: L-threonine is first activated by ATP to form Thr-AMP and then transferred to the acceptor end of tRNA(Thr). Also edits incorrectly charged L-seryl-tRNA(Thr). This is Threonine--tRNA ligase from Streptococcus agalactiae serotype III (strain NEM316).